A 68-amino-acid polypeptide reads, in one-letter code: DNA-directed RNA polymerase subunit omega (68 aa).

The protein belongs to the RNA polymerase subunit omega family. As to quaternary structure, the RNAP catalytic core consists of 2 alpha, 1 beta, 1 beta' and 1 omega subunit. When a sigma factor is associated with the core the holoenzyme is formed, which can initiate transcription.

The enzyme catalyses RNA(n) + a ribonucleoside 5'-triphosphate = RNA(n+1) + diphosphate. Functionally, promotes RNA polymerase assembly. Latches the N- and C-terminal regions of the beta' subunit thereby facilitating its interaction with the beta and alpha subunits. The sequence is that of DNA-directed RNA polymerase subunit omega from Nitrosospira multiformis (strain ATCC 25196 / NCIMB 11849 / C 71).